A 190-amino-acid polypeptide reads, in one-letter code: Translation initiation factor IF-3 (190 aa).

The protein belongs to the IF-3 family. As to quaternary structure, monomer.

The protein resides in the cytoplasm. IF-3 binds to the 30S ribosomal subunit and shifts the equilibrium between 70S ribosomes and their 50S and 30S subunits in favor of the free subunits, thus enhancing the availability of 30S subunits on which protein synthesis initiation begins. The polypeptide is Translation initiation factor IF-3 (Prochlorococcus marinus (strain AS9601)).